We begin with the raw amino-acid sequence, 455 residues long: Bifunctional protein GlmU (455 aa).

The tract at residues 1–227 (MDSLSIVILA…SWEAAGVNNK (227 aa)) is pyrophosphorylase. UDP-N-acetyl-alpha-D-glucosamine-binding positions include 9-12 (LAAG), Lys-23, Gln-74, 79-80 (GT), 101-103 (YGD), Gly-137, Glu-152, Asn-167, and Asn-225. Asp-103 is a binding site for Mg(2+). Asn-225 serves as a coordination point for Mg(2+). The segment at 228-248 (VQLAELERILQANQARALLEA) is linker. The interval 249-455 (GVTLADPARI…GWKRPQKKSG (207 aa)) is N-acetyltransferase. Arg-331 and Lys-349 together coordinate UDP-N-acetyl-alpha-D-glucosamine. His-361 serves as the catalytic Proton acceptor. UDP-N-acetyl-alpha-D-glucosamine contacts are provided by Tyr-364 and Asn-375. Acetyl-CoA is bound by residues Ala-378, 384–385 (NY), Ser-403, Ala-421, and Arg-438.

The protein in the N-terminal section; belongs to the N-acetylglucosamine-1-phosphate uridyltransferase family. This sequence in the C-terminal section; belongs to the transferase hexapeptide repeat family. Homotrimer. It depends on Mg(2+) as a cofactor.

It is found in the cytoplasm. The enzyme catalyses alpha-D-glucosamine 1-phosphate + acetyl-CoA = N-acetyl-alpha-D-glucosamine 1-phosphate + CoA + H(+). The catalysed reaction is N-acetyl-alpha-D-glucosamine 1-phosphate + UTP + H(+) = UDP-N-acetyl-alpha-D-glucosamine + diphosphate. It participates in nucleotide-sugar biosynthesis; UDP-N-acetyl-alpha-D-glucosamine biosynthesis; N-acetyl-alpha-D-glucosamine 1-phosphate from alpha-D-glucosamine 6-phosphate (route II): step 2/2. Its pathway is nucleotide-sugar biosynthesis; UDP-N-acetyl-alpha-D-glucosamine biosynthesis; UDP-N-acetyl-alpha-D-glucosamine from N-acetyl-alpha-D-glucosamine 1-phosphate: step 1/1. The protein operates within bacterial outer membrane biogenesis; LPS lipid A biosynthesis. Functionally, catalyzes the last two sequential reactions in the de novo biosynthetic pathway for UDP-N-acetylglucosamine (UDP-GlcNAc). The C-terminal domain catalyzes the transfer of acetyl group from acetyl coenzyme A to glucosamine-1-phosphate (GlcN-1-P) to produce N-acetylglucosamine-1-phosphate (GlcNAc-1-P), which is converted into UDP-GlcNAc by the transfer of uridine 5-monophosphate (from uridine 5-triphosphate), a reaction catalyzed by the N-terminal domain. The protein is Bifunctional protein GlmU of Chromobacterium violaceum (strain ATCC 12472 / DSM 30191 / JCM 1249 / CCUG 213 / NBRC 12614 / NCIMB 9131 / NCTC 9757 / MK).